We begin with the raw amino-acid sequence, 784 residues long: 1-phosphatidylinositol 4,5-bisphosphate phosphodiesterase delta-3-A (784 aa).

Positions 1–25 are disordered; it reads MLGRKKNPETVQTESKSVESKTHDP. The segment covering 16-25 has biased composition (basic and acidic residues); it reads KSVESKTHDP. The region spanning 38–149 is the PH domain; sequence LLMLQGSKMM…WVRGIRTLKD (112 aa). The interval 48–78 is substrate binding; it reads KVRSQRWRKDRRLKLLEDCVTVWCESSKTSR. 3 EF-hand domains span residues 159 to 194, 195 to 230, and 227 to 262; these read KLDH…INID, LNEQ…MMRR, and MMRR…QGED. Residues D172, N174, D176, K178, E183, D208, S210, D212, R214, and E219 each contribute to the Ca(2+) site. A PI-PLC X-box domain is found at 313–458; it reads QDMSKPLAHY…LKGRILLKGK (146 aa). Residue H328 is part of the active site. 3 residues coordinate Ca(2+): N329, E358, and D360. The active site involves H373. E407 provides a ligand contact to Ca(2+). Substrate-binding residues include K456 and K458. Positions 473-498 are disordered; the sequence is FTNSSDEESVAGGNKKESKKDLARSA. The segment covering 486 to 495 has biased composition (basic and acidic residues); sequence NKKESKKDLA. In terms of domain architecture, PI-PLC Y-box spans 506–621; the sequence is LSDLVVYCQS…GYVLKPEFLC (116 aa). Substrate is bound by residues S534 and R561. In terms of domain architecture, C2 spans 621 to 750; the sequence is CDPKSDFDPE…TGYRHVHLLK (130 aa). Positions 664, 666, 690, 719, and 721 each coordinate Ca(2+).

Requires Ca(2+) as cofactor.

It is found in the membrane. It localises to the cytoplasm. Its subcellular location is the cleavage furrow. It carries out the reaction a 1,2-diacyl-sn-glycero-3-phospho-(1D-myo-inositol-4,5-bisphosphate) + H2O = 1D-myo-inositol 1,4,5-trisphosphate + a 1,2-diacyl-sn-glycerol + H(+). Its function is as follows. Hydrolyzes the phosphatidylinositol 4,5-bisphosphate (PIP2) to generate 2 second messenger molecules diacylglycerol (DAG) and inositol 1,4,5-trisphosphate (IP3). DAG mediates the activation of protein kinase C (PKC), while IP3 releases Ca(2+) from intracellular stores. This Danio rerio (Zebrafish) protein is 1-phosphatidylinositol 4,5-bisphosphate phosphodiesterase delta-3-A (plcd3a).